The primary structure comprises 343 residues: Probable dual-specificity RNA methyltransferase RlmN (343 aa).

The active-site Proton acceptor is Glu93. The Radical SAM core domain occupies 99–320; that stretch reads TDDRATLCVS…NAKGVVCTIR (222 aa). Cys106 and Cys331 are oxidised to a cystine. [4Fe-4S] cluster-binding residues include Cys113, Cys117, and Cys120. Residues 158 to 159, Ser190, 212 to 214, and His288 contribute to the S-adenosyl-L-methionine site; these read GE and SLH. The S-methylcysteine intermediate role is filled by Cys331.

It belongs to the radical SAM superfamily. RlmN family. It depends on [4Fe-4S] cluster as a cofactor.

The protein localises to the cytoplasm. It catalyses the reaction adenosine(2503) in 23S rRNA + 2 reduced [2Fe-2S]-[ferredoxin] + 2 S-adenosyl-L-methionine = 2-methyladenosine(2503) in 23S rRNA + 5'-deoxyadenosine + L-methionine + 2 oxidized [2Fe-2S]-[ferredoxin] + S-adenosyl-L-homocysteine. It carries out the reaction adenosine(37) in tRNA + 2 reduced [2Fe-2S]-[ferredoxin] + 2 S-adenosyl-L-methionine = 2-methyladenosine(37) in tRNA + 5'-deoxyadenosine + L-methionine + 2 oxidized [2Fe-2S]-[ferredoxin] + S-adenosyl-L-homocysteine. Specifically methylates position 2 of adenine 2503 in 23S rRNA and position 2 of adenine 37 in tRNAs. The polypeptide is Probable dual-specificity RNA methyltransferase RlmN (Parabacteroides distasonis (strain ATCC 8503 / DSM 20701 / CIP 104284 / JCM 5825 / NCTC 11152)).